The sequence spans 516 residues: MWALRAAVRPGLRLSRVGRGRSAPRAAAPSCPARALAAVGRRSPGNLEGPWGGGRGLRADGGRSRTGDDEEEPEDADENAEEELLRGEPLLPAGTQRVCLVHPDVKWGPGKSQMTRAEWQVAEATALVHTLDGWSVVQTMVVSTKTPDRKLIFGKGNFEHLTEKIRGSPDITCVFLNVERMAAPTKKELEAAWGVEVFDRFTVVLHIFRCNARTKEARLQVALAEMPLHRSNLKRDVAHLYRGVGSRYIMGSGESFMQLQQRLLREKEAKIRKALDRLRKKRHLLRRQRTRREFPVISVVGYTNCGKTTLIKALTGDAAIQPRDQLFATLDVTAHAGTLPSRMTVLYVDTIGFLSQLPHGLIESFSATLEDVAHSDLILHVRDVSHPEAELQKCSVLSTLRGLQLPAPLLDSMVEVHNKVDLVPGYSPTEPNVVPVSALRGHGLQELKAELDAAVLKATGRQILTLRVRLAGAQLSWLYKEATVQEVDVIPEDGAADVRVIISNSAYGKFRKLFPG.

Residues 18–39 (GRGRSAPRAAAPSCPARALAAV) are compositionally biased toward low complexity. Residues 18-82 (GRGRSAPRAA…PEDADENAEE (65 aa)) form a disordered region. Residues 57–67 (LRADGGRSRTG) show a composition bias toward basic and acidic residues. Over residues 68–82 (DDEEEPEDADENAEE) the composition is skewed to acidic residues. In terms of domain architecture, Hflx-type G spans 295 to 459 (PVISVVGYTN…ELDAAVLKAT (165 aa)). Residues 301-308 (GYTNCGKT), 327-331 (FATLD), 349-352 (DTIG), 418-421 (NKVD), and 437-439 (SAL) contribute to the GTP site. T308 and T329 together coordinate Mg(2+).

The protein belongs to the TRAFAC class OBG-HflX-like GTPase superfamily. HflX GTPase family. The cofactor is Mg(2+). Ubiquitously expressed.

The polypeptide is Putative GTP-binding protein 6 (GTPBP6) (Homo sapiens (Human)).